A 201-amino-acid polypeptide reads, in one-letter code: Cytochrome c biogenesis ATP-binding export protein CcmA (201 aa).

The region spanning 3-200 (LIAENLGGER…EGAELRMGVA (198 aa)) is the ABC transporter domain. ATP is bound at residue 35-42 (GPNGSGKS).

It belongs to the ABC transporter superfamily. CcmA exporter (TC 3.A.1.107) family. In terms of assembly, the complex is composed of two ATP-binding proteins (CcmA) and two transmembrane proteins (CcmB).

It localises to the cell inner membrane. The enzyme catalyses heme b(in) + ATP + H2O = heme b(out) + ADP + phosphate + H(+). In terms of biological role, part of the ABC transporter complex CcmAB involved in the biogenesis of c-type cytochromes; once thought to export heme, this seems not to be the case, but its exact role is uncertain. Responsible for energy coupling to the transport system. This chain is Cytochrome c biogenesis ATP-binding export protein CcmA, found in Mesorhizobium japonicum (strain LMG 29417 / CECT 9101 / MAFF 303099) (Mesorhizobium loti (strain MAFF 303099)).